We begin with the raw amino-acid sequence, 919 residues long: MKVARFQKIPNGENETMIPVLTSKKASELPVSEVASILQADLQNGLNKCEVSHRRAFHGWNEFDISEDEPLWKKYISQFKNPLIMLLLASAVISVLMHQFDDAVSITVAILIVVTVAFVQEYRSEKSLEELSKLVPPECHCVREGKLEHTLARDLVPGDTVCLSVGDRVPADLRLFEAVDLSIDESSLTGETTPCSKVTAPQPAATNGDLASRSNIAFMGTLVRCGKAKGVVIGTGENSEFGEVFKMMQAEEAPKTPLQKSMDLLGKQLSFYSFGIIGIIMLVGWLLGKDILEMFTISVSLAVAAIPEGLPIVVTVTLALGVMRMVKKRAIVKKLPIVETLGCCNVICSDKTGTLTKNEMTVTHIFTSDGLHAEVTGVGYNQFGEVIVDGDVVHGFYNPAVSRIVEAGCVCNDAVIRNNTLMGKPTEGALIALAMKMGLDGLQQDYIRKAEYPFSSEQKWMAVKCVHRTQQDRPEICFMKGAYEQVIKYCTTYQSKGQTLTLTQQQRDVYQQEKARMGSAGLRVLALASGPELGQLTFLGLVGIIDPPRTGVKEAVTTLIASGVSIKMITGDSQETAVAIASRLGLYSKTSQSVSGEEIDAMDVQQLSQIVPKVAVFYRASPRHKMKIIKSLQKNGSVVAMTGDGVNDAVALKAADIGVAMGQTGTDVCKEAADMILVDDDFQTIMSAIEEGKGIYNNIKNFVRFQLSTSIAALTLISLATLMNFPNPLNAMQILWINIIMDGPPAQSLGVEPVDKDVIRKPPRNWKDSILTKNLILKILVSSIIIVCGTLFVFWRELRDNVITPRDTTMTFTCFVFFDMFNALSSRSQTKSVFEIGLCSNRMFCYAVLGSIMGQLLVIYFPPLQKVFQTESLSILDLLFLLGLTSSVCIVAEIIKKVERSREKIQKHVSSTSSSFLEV.

Over 1-70 (MKVARFQKIP…NEFDISEDEP (70 aa)) the chain is Cytoplasmic. A helical membrane pass occupies residues 71–91 (LWKKYISQFKNPLIMLLLASA). The Lumenal segment spans residues 92-104 (VISVLMHQFDDAV). Residues 105 to 123 (SITVAILIVVTVAFVQEYR) traverse the membrane as a helical segment. The Cytoplasmic segment spans residues 124-262 (SEKSLEELSK…APKTPLQKSM (139 aa)). A helical membrane pass occupies residues 263–282 (DLLGKQLSFYSFGIIGIIML). At 283 to 294 (VGWLLGKDILEM) the chain is on the lumenal side. A helical membrane pass occupies residues 295-312 (FTISVSLAVAAIPEGLPI). Residues Val-303, Ala-304, Ile-306, and Glu-308 each contribute to the Ca(2+) site. The Cytoplasmic portion of the chain corresponds to 313 to 699 (VVTVTLALGV…EEGKGIYNNI (387 aa)). Asp-350 acts as the 4-aspartylphosphate intermediate in catalysis. Residues Asp-644 and Asp-648 each contribute to the Mg(2+) site. A helical transmembrane segment spans residues 700–719 (KNFVRFQLSTSIAALTLISL). Residues 720–729 (ATLMNFPNPL) are Lumenal-facing. A helical membrane pass occupies residues 730–750 (NAMQILWINIIMDGPPAQSLG). Asn-738 and Asp-742 together coordinate Ca(2+). Residues 751–770 (VEPVDKDVIRKPPRNWKDSI) are Cytoplasmic-facing. A helical membrane pass occupies residues 771 to 793 (LTKNLILKILVSSIIIVCGTLFV). At 794 to 808 (FWRELRDNVITPRDT) the chain is on the lumenal side. The helical transmembrane segment at 809-828 (TMTFTCFVFFDMFNALSSRS) threads the bilayer. Over 829–841 (QTKSVFEIGLCSN) the chain is Cytoplasmic. Residues 842 to 860 (RMFCYAVLGSIMGQLLVIY) form a helical membrane-spanning segment. At 861–875 (FPPLQKVFQTESLSI) the chain is on the lumenal side. A helical membrane pass occupies residues 876-896 (LDLLFLLGLTSSVCIVAEIIK). The Cytoplasmic portion of the chain corresponds to 897–919 (KVERSREKIQKHVSSTSSSFLEV).

It belongs to the cation transport ATPase (P-type) (TC 3.A.3) family. Type IIA subfamily. Monomer. Homodimer. In terms of tissue distribution, found in most tissues except colon, thymus, spleen and leukocytes. Expressed in keratinocytes (at protein level).

It localises to the golgi apparatus. The protein resides in the trans-Golgi network membrane. The protein localises to the golgi stack membrane. It catalyses the reaction Ca(2+)(in) + ATP + H2O = Ca(2+)(out) + ADP + phosphate + H(+). The enzyme catalyses Mn(2+)(in) + ATP + H2O = Mn(2+)(out) + ADP + phosphate + H(+). Its function is as follows. ATP-driven pump that supplies the Golgi apparatus with Ca(2+) and Mn(2+) ions, both essential cofactors for processing and trafficking of newly synthesized proteins in the secretory pathway. Within a catalytic cycle, acquires Ca(2+) or Mn(2+) ions on the cytoplasmic side of the membrane and delivers them to the lumenal side. The transfer of ions across the membrane is coupled to ATP hydrolysis and is associated with a transient phosphorylation that shifts the pump conformation from inward-facing to outward-facing state. Plays a primary role in the maintenance of Ca(2+) homeostasis in the trans-Golgi compartment with a functional impact on Golgi and post-Golgi protein sorting as well as a structural impact on cisternae morphology. Responsible for loading the Golgi stores with Ca(2+) ions in keratinocytes, contributing to keratinocyte differentiation and epidermis integrity. Participates in Ca(2+) and Mn(2+) ions uptake into the Golgi store of hippocampal neurons and regulates protein trafficking required for neural polarity. May also play a role in the maintenance of Ca(2+) and Mn(2+) homeostasis and signaling in the cytosol while preventing cytotoxicity. In Homo sapiens (Human), this protein is Calcium-transporting ATPase type 2C member 1.